Reading from the N-terminus, the 216-residue chain is Orotate phosphoribosyltransferase (216 aa).

5-phospho-alpha-D-ribose 1-diphosphate-binding positions include R100, K104, H106, and 126 to 134 (EDLISTGGS). S130 is a binding site for orotate.

It belongs to the purine/pyrimidine phosphoribosyltransferase family. PyrE subfamily. As to quaternary structure, homodimer. Interacts with BrxC. It depends on Mg(2+) as a cofactor.

The enzyme catalyses orotidine 5'-phosphate + diphosphate = orotate + 5-phospho-alpha-D-ribose 1-diphosphate. The protein operates within pyrimidine metabolism; UMP biosynthesis via de novo pathway; UMP from orotate: step 1/2. In terms of biological role, catalyzes the transfer of a ribosyl phosphate group from 5-phosphoribose 1-diphosphate to orotate, leading to the formation of orotidine monophosphate (OMP). The polypeptide is Orotate phosphoribosyltransferase (Bacillus subtilis (strain 168)).